The chain runs to 384 residues: MKTTISVIKADIGSLAGHHIVHPDTMAAANKVLASAKEQGIILDYYITHVGDDLQLIMTHTRGELDTKVHETAWNAFKEAAKVAKDLGLYAAGQDLLSDSFSGNVRGLGPGVAEMEIEERASEPIAIFMADKTEPGAYNLPLYKMFADPFNTPGLVIDPTMHGGFKFEVLDVYQGEAVMLSAPQEIYDLLALIGTPARYVIRRVYRNEDNLLAAVVSIERLNLIAGKYVGKDDPVMIVRLQHGLPALGEALEAFAFPHLVPGWMRGSHYGPLMPVSQRDAKATRFDGPPRLLGLGFNVKNGRLVGPTDLFDDPAFDETRRLANIVADYMRRHGPFMPHRLEPTEMEYTTLPLILEKLKDRFKKESDVYKAKESIYAKEESQGHD.

Catalysis depends on D11, which acts as the Proton acceptor; for FBP phosphatase activity. Residues D11, H18, D52, and D53 each coordinate Mg(2+). Position 18 (H18) interacts with beta-D-fructose 1,6-bisphosphate. H18 is a dihydroxyacetone phosphate binding site. Y90 lines the beta-D-fructose 1,6-bisphosphate pocket. Position 94 (Q94) interacts with Mg(2+). 103-104 (GN) serves as a coordination point for beta-D-fructose 1,6-bisphosphate. A Mg(2+)-binding site is contributed by D131. Residue K132 participates in beta-D-fructose 1,6-bisphosphate binding. Position 132 (K132) interacts with dihydroxyacetone phosphate. Y228 functions as the Proton donor/acceptor; for FBP aldolase activity in the catalytic mechanism. The Mg(2+) site is built by K231, D232, and D233. Residue K231 is the Schiff-base intermediate with DHAP; for FBP aldolase activity of the active site. Residues 241 to 242 (QH), R265, D286, and Y347 each bind beta-D-fructose 1,6-bisphosphate. Residues R265 and D286 each contribute to the dihydroxyacetone phosphate site.

Belongs to the FBP aldolase/phosphatase family. As to quaternary structure, homooctamer; dimer of tetramers. Mg(2+) is required as a cofactor.

It catalyses the reaction beta-D-fructose 1,6-bisphosphate + H2O = beta-D-fructose 6-phosphate + phosphate. It carries out the reaction beta-D-fructose 1,6-bisphosphate = D-glyceraldehyde 3-phosphate + dihydroxyacetone phosphate. It functions in the pathway carbohydrate biosynthesis; gluconeogenesis. Functionally, catalyzes two subsequent steps in gluconeogenesis: the aldol condensation of dihydroxyacetone phosphate (DHAP) and glyceraldehyde-3-phosphate (GA3P) to fructose-1,6-bisphosphate (FBP), and the dephosphorylation of FBP to fructose-6-phosphate (F6P). The sequence is that of Fructose-1,6-bisphosphate aldolase/phosphatase from Sulfurisphaera tokodaii (strain DSM 16993 / JCM 10545 / NBRC 100140 / 7) (Sulfolobus tokodaii).